The chain runs to 361 residues: 3-dehydroquinate synthase (361 aa).

NAD(+) contacts are provided by residues Asn-41, 70–75 (DGEQYK), 104–108 (GVIGD), 128–129 (TT), Lys-141, Lys-150, 150–151 (KN), and 168–171 (CLTT). 3 residues coordinate Zn(2+): Glu-183, His-246, and His-263.

The protein belongs to the sugar phosphate cyclases superfamily. Dehydroquinate synthase family. The cofactor is NAD(+). Co(2+) is required as a cofactor. Requires Zn(2+) as cofactor.

The protein localises to the cytoplasm. The enzyme catalyses 7-phospho-2-dehydro-3-deoxy-D-arabino-heptonate = 3-dehydroquinate + phosphate. Its pathway is metabolic intermediate biosynthesis; chorismate biosynthesis; chorismate from D-erythrose 4-phosphate and phosphoenolpyruvate: step 2/7. Functionally, catalyzes the conversion of 3-deoxy-D-arabino-heptulosonate 7-phosphate (DAHP) to dehydroquinate (DHQ). The chain is 3-dehydroquinate synthase from Vibrio cholerae serotype O1 (strain ATCC 39315 / El Tor Inaba N16961).